Consider the following 201-residue polypeptide: Ras-related protein Rab-35 (201 aa).

Residues Gly18, Val19, Gly20, Lys21, Ser22, Ser23, Ser34, Gly35, Tyr37, Thr39, and Thr40 each contribute to the GTP site. Ser22 serves as a coordination point for Mg(2+). The Switch 1 signature appears at 30-42 (DNTFSGSYITTIG). Residues Thr40 and Asp63 each contribute to the Mg(2+) site. The short motif at 64-80 (TAGQERFRTITSTYYRG) is the Switch 2 element. Position 66 (Gly66) interacts with GTP. A Phosphothreonine; by LRRK2 modification is found at Thr72. Ser75 carries the post-translational modification O-(2-cholinephosphoryl)serine. Tyr77 is modified (O-AMP-tyrosine). The GTP site is built by Asn120, Lys121, Asp123, Ala151, and Lys152. Residues Cys200 and Cys201 are each lipidated (S-geranylgeranyl cysteine).

The protein belongs to the small GTPase superfamily. Rab family. As to quaternary structure, interacts with DENND1A and DENND1B; in a nucleotide-dependent manner. Interacts with DENND1C; weak interaction which is nucleotide-independent. Interacts (GTP-bound form) with ACAP2, RUSC2, OCRL MICAL1 and MICALL1; the interaction is direct and probably recruits these effectors to membranes. Interacts with EHD1; the interaction is indirect through MICALL1 and probably recruits EHD1 to membranes. Interacts with GDI1, GDI2, CHM and CHML; phosphorylation at Thr-72 by LRRK2 disrupts these interactions. Mg(2+) serves as cofactor. In terms of processing, phosphorylation at Thr-72 by LRRK2 prevents the association of regulatory proteins including CHM, CHML and GDP dissociation inhibitors GDI1 and GDI2. AMPylation at Tyr-77 by L.pneumophila DrrA occurs in the switch 2 region and leads to moderate inactivation of the GTPase activity. It appears to prolong the lifetime of the GTP state of RAB1B by restricting access of GTPase effectors to switch 2 and blocking effector-stimulated GTP hydrolysis, thereby rendering RAB35 constitutively active. Post-translationally, phosphocholinated by L.pneumophila AnkX. Both GDP-bound and GTP-bound forms can be phosphocholinated. Phosphocholination inhibits the GEF activity of DENND1A.

Its subcellular location is the cell membrane. The protein resides in the membrane. The protein localises to the clathrin-coated pit. It is found in the cytoplasmic vesicle. It localises to the clathrin-coated vesicle. Its subcellular location is the endosome. The protein resides in the melanosome. The catalysed reaction is GTP + H2O = GDP + phosphate + H(+). With respect to regulation, regulated by guanine nucleotide exchange factors (GEFs) including DENND1A, DENND1B and DENND1C which promote the exchange of bound GDP for free GTP. Regulated by GTPase activating proteins (GAPs) including TBC1D10 and TBC1D13 which increase GTP hydrolysis activity. Inhibited by GDP dissociation inhibitors (GDIs) which prevent Rab-GDP dissociation. In terms of biological role, the small GTPases Rab are key regulators of intracellular membrane trafficking, from the formation of transport vesicles to their fusion with membranes. Rabs cycle between an inactive GDP-bound form and an active GTP-bound form that is able to recruit to membranes different sets of downstream effectors directly responsible for vesicle formation, movement, tethering and fusion. RAB35 is involved in the process of endocytosis and is an essential rate-limiting regulator of the fast recycling pathway back to the plasma membrane. During cytokinesis, required for the postfurrowing terminal steps, namely for intercellular bridge stability and abscission, possibly by controlling phosphatidylinositol 4,5-bis phosphate (PIP2) and SEPT2 localization at the intercellular bridge. May indirectly regulate neurite outgrowth. Together with TBC1D13 may be involved in regulation of insulin-induced glucose transporter SLC2A4/GLUT4 translocation to the plasma membrane in adipocytes. The chain is Ras-related protein Rab-35 from Homo sapiens (Human).